The following is a 338-amino-acid chain: Heat-inducible transcription repressor HrcA (338 aa).

It belongs to the HrcA family.

Functionally, negative regulator of class I heat shock genes (grpE-dnaK-dnaJ and groELS operons). Prevents heat-shock induction of these operons. The sequence is that of Heat-inducible transcription repressor HrcA from Bacillus cereus (strain 03BB102).